Here is a 125-residue protein sequence, read N- to C-terminus: Lectin (125 aa).

Positions 1–120 (MDYEILFSDE…CGGARRVICE (120 aa)) constitute a C-type lectin domain. Cystine bridges form between Cys-21–Cys-119 and Cys-96–Cys-111.

As to quaternary structure, homodimer.

Role in the defense system of the organism against microorganisms. This calcium-binding lectin binds galactose. In Polyandrocarpa misakiensis (Tunicate), this protein is Lectin.